The following is a 726-amino-acid chain: Catalase-peroxidase (726 aa).

Residues 1-33 (MSTSDDIHNTTATGKCPFHQGGHDQSAGAGTTT) are disordered. Residues 105-226 (WHGAGTYRSI…LGATEMGLIY (122 aa)) constitute a cross-link (tryptophyl-tyrosyl-methioninium (Trp-Tyr) (with M-252)). His106 (proton acceptor) is an active-site residue. The tryptophyl-tyrosyl-methioninium (Tyr-Met) (with W-105) cross-link spans 226-252 (YVNPEGPDHSGEPLSAAAAIRATFGNM). Residue His267 coordinates heme b.

Belongs to the peroxidase family. Peroxidase/catalase subfamily. Homodimer or homotetramer. Heme b is required as a cofactor. Post-translationally, formation of the three residue Trp-Tyr-Met cross-link is important for the catalase, but not the peroxidase activity of the enzyme.

The catalysed reaction is H2O2 + AH2 = A + 2 H2O. The enzyme catalyses 2 H2O2 = O2 + 2 H2O. In terms of biological role, bifunctional enzyme with both catalase and broad-spectrum peroxidase activity. The polypeptide is Catalase-peroxidase (Shigella sonnei (strain Ss046)).